Consider the following 1401-residue polypeptide: DNA-directed RNA polymerase subunit beta' (1401 aa).

Cys71, Cys73, Cys86, and Cys89 together coordinate Zn(2+). Asp462, Asp464, and Asp466 together coordinate Mg(2+). The Zn(2+) site is built by Cys810, Cys884, Cys891, and Cys894. Positions 1378-1401 (EKQATIVPSAPEPEPLALPTPEQS) are disordered.

It belongs to the RNA polymerase beta' chain family. In terms of assembly, the RNAP catalytic core consists of 2 alpha, 1 beta, 1 beta' and 1 omega subunit. When a sigma factor is associated with the core the holoenzyme is formed, which can initiate transcription. Mg(2+) serves as cofactor. It depends on Zn(2+) as a cofactor.

It carries out the reaction RNA(n) + a ribonucleoside 5'-triphosphate = RNA(n+1) + diphosphate. In terms of biological role, DNA-dependent RNA polymerase catalyzes the transcription of DNA into RNA using the four ribonucleoside triphosphates as substrates. This is DNA-directed RNA polymerase subunit beta' from Rhodopseudomonas palustris (strain BisB18).